A 413-amino-acid polypeptide reads, in one-letter code: Gamma-lactamase FDB1 (413 aa).

Zn(2+) contacts are provided by histidine 126, histidine 128, aspartate 130, histidine 131, histidine 211, aspartate 235, and histidine 323.

Belongs to the metallo-beta-lactamase superfamily.

Its pathway is xenobiotic degradation. Its function is as follows. Gamma-lactamase; part of the Fusarium detoxification of benzoxazolinone cluster involved in the degradation of benzoxazolinones produced by the host plant. Maize, wheat, and rye produce the 2 benzoxazinone phytoanticipins 2,4-dihy-droxy-7-methoxy-1,4-benzoxazin-3-one (DIMBOA) and 2,4-dihydroxy-1,4-benzoxazin-3-one (DIBOA) that, due to their inherent instability once released, spontaneously degrade to the more stable corresponding benzoxazolinones, 6-methoxy-2-benzoxazolinone (MBOA) and 2-benzoxazolinone (BOA), respectively. The first step in the detoxification of benzoxazolinones involves the hydrolysis of the cyclic ester bond of benzoxazolinones by the gamma-lactamase FDB1 to aminophenols. FDB1 is able to convert BOA into 2-aminophenol (2-AP), as well as MBOA into 5-methoxy-2-aminophenol (2-AMP). The N-malonyltransferase FDB2 then metabolizes aminophenols via N-malonylation to non-toxic malonamic acids. FDB2 converts 2-AP into N-(2-hydroxyphenyl) malonamic acid (HPMA) and 2-AMP into N-(2-hydroxy-4-methoxyphenyl) malonamic acid (HMPMA). The cluster also contains 2 transcription factors (FDB3 and FPSE_08121), an aldo-keto reductase (FPSE_08125) that possibly associates with a ketone component of BOA and MBOA degradation, an esterase (FPSE_08126), an acyl-CoA transferase (FPSE_08120), a solute carrier protein (FPSE_08119) and a transmembrane transporter (FPSE_08127) proposed to shuttle metabolites of benzoxazolinone degradation. This Fusarium pseudograminearum (strain CS3096) (Wheat and barley crown-rot fungus) protein is Gamma-lactamase FDB1.